The chain runs to 253 residues: uncharacterized protein (253 aa).

An N-terminal signal peptide occupies residues 1–15 (MNRVILFHFHFFKNA).

This is an uncharacterized protein from Archaeoglobus fulgidus (strain ATCC 49558 / DSM 4304 / JCM 9628 / NBRC 100126 / VC-16).